A 408-amino-acid chain; its full sequence is Argininosuccinate synthase (408 aa).

ATP is bound at residue 14–22 (AYSGGLDTS). 2 residues coordinate L-citrulline: Tyr92 and Ser97. Gly122 provides a ligand contact to ATP. Positions 124, 128, and 129 each coordinate L-aspartate. L-citrulline is bound at residue Asn128. L-citrulline-binding residues include Arg132, Ser181, Ser190, Glu266, and Tyr278.

This sequence belongs to the argininosuccinate synthase family. Type 1 subfamily. Homotetramer.

Its subcellular location is the cytoplasm. The catalysed reaction is L-citrulline + L-aspartate + ATP = 2-(N(omega)-L-arginino)succinate + AMP + diphosphate + H(+). The protein operates within amino-acid biosynthesis; L-arginine biosynthesis; L-arginine from L-ornithine and carbamoyl phosphate: step 2/3. This chain is Argininosuccinate synthase, found in Moorella thermoacetica (strain ATCC 39073 / JCM 9320).